The sequence spans 187 residues: Adenylate kinase (187 aa).

10–15 (GSGKGT) contacts ATP. The interval 30–59 (STGDLLRAEVAAGSPLGVKAKEVMARGDLV) is NMP. Residues Thr31, Arg36, 57-59 (DLV), 85-88 (GYPR), and Gln92 each bind AMP. The LID stretch occupies residues 126 to 136 (GRAKAEGREDD). Arg127 is a binding site for ATP. The AMP site is built by Arg133 and Arg144. Gly172 contacts ATP.

This sequence belongs to the adenylate kinase family. As to quaternary structure, monomer.

It localises to the cytoplasm. It catalyses the reaction AMP + ATP = 2 ADP. It participates in purine metabolism; AMP biosynthesis via salvage pathway; AMP from ADP: step 1/1. Functionally, catalyzes the reversible transfer of the terminal phosphate group between ATP and AMP. Plays an important role in cellular energy homeostasis and in adenine nucleotide metabolism. The chain is Adenylate kinase from Xanthomonas campestris pv. campestris (strain B100).